Here is a 261-residue protein sequence, read N- to C-terminus: Methylmalonyl-CoA decarboxylase (261 aa).

Substrate is bound by residues 64–68 (AGHDI), glycine 110, threonine 132, and lysine 253.

It belongs to the enoyl-CoA hydratase/isomerase family. As to quaternary structure, dimer of homotrimers.

It carries out the reaction (R)-methylmalonyl-CoA + H(+) = propanoyl-CoA + CO2. In terms of biological role, catalyzes the decarboxylation of (R)-methylmalonyl-CoA to propionyl-CoA. Could be part of a pathway that converts succinate to propanoate. In Escherichia coli (strain K12), this protein is Methylmalonyl-CoA decarboxylase (scpB).